The following is a 117-amino-acid chain: Cuticle protein CP1243 (117 aa).

A run of 4 repeats spans residues 1–17 (NYGESGIVYPDGRLVQF), 26–43 (AEIGEAGVVMHDGTHVQF), 67–84 (QPYGYSGIMKPDGNNRQF), and 93–110 (VLVGPSGAVTADGKNVQF).

As to expression, calcified shell.

The polypeptide is Cuticle protein CP1243 (Cancer pagurus (Rock crab)).